Here is a 66-residue protein sequence, read N- to C-terminus: Large ribosomal subunit protein bL31 (66 aa).

Residues Cys16, Cys18, Cys36, and Cys39 each contribute to the Zn(2+) site.

This sequence belongs to the bacterial ribosomal protein bL31 family. Type A subfamily. In terms of assembly, part of the 50S ribosomal subunit. It depends on Zn(2+) as a cofactor.

Binds the 23S rRNA. This Clostridioides difficile (strain 630) (Peptoclostridium difficile) protein is Large ribosomal subunit protein bL31.